Here is a 224-residue protein sequence, read N- to C-terminus: MGLFGKTQEKPPKELVNEWSLKIRKEMRVVDRQIRDIQREEEKVKRSVKDAAKKGQKEVCVVLAKEMIRSRKAVSKLYASKAHMNSVLMGMKNQLAVLRVAGSLQKSTEVMKAMQSLVKIPEIQATMRELSKEMMKAGIIEEMLEDTFESMDDQEEMEEAAEMEIDRILFEITAGALGKAPSKVTDALPEPEPAGAMAASEEGEEEEDEEDLEAMQSRLATLRS.

Gly-2 carries N-myristoyl glycine lipidation. The intramolecular interaction with C-terminus stretch occupies residues 2–113 (GLFGKTQEKP…LQKSTEVMKA (112 aa)). The stretch at 22 to 54 (KIRKEMRVVDRQIRDIQREEEKVKRSVKDAAKK) forms a coiled coil. Important for autoinhibitory function stretches follow at residues 59 to 64 (VCVVLA) and 168 to 169 (IL). The stretch at 149–224 (ESMDDQEEME…MQSRLATLRS (76 aa)) forms a coiled coil. The segment at 151-222 (MDDQEEMEEA…EAMQSRLATL (72 aa)) is intramolecular interaction with N-terminus. Residues 151–224 (MDDQEEMEEA…MQSRLATLRS (74 aa)) form an interaction with VPS4A region. Lys-179 is covalently cross-linked (Glycyl lysine isopeptide (Lys-Gly) (interchain with G-Cter in ubiquitin)). The disordered stretch occupies residues 180-224 (APSKVTDALPEPEPAGAMAASEEGEEEEDEEDLEAMQSRLATLRS). 3 interaction with STAMBP regions span residues 196-224 (AMAA…TLRS), 205-209 (EEEDE), and 223-224 (RS). A Phosphoserine modification is found at Ser-200. The short motif at 201-213 (EEGEEEEDEEDLE) is the MIT-interacting motif element. Over residues 201 to 213 (EEGEEEEDEEDLE) the composition is skewed to acidic residues.

The protein belongs to the SNF7 family. As to quaternary structure, probable core component of the endosomal sorting required for transport complex III (ESCRT-III). ESCRT-III components are thought to multimerize to form a flat lattice on the perimeter membrane of the endosome. Several assembly forms of ESCRT-III may exist that interact and act sequentially. Forms a metastable monomer in solution; its core structure (without part of the putative autoinhibitory C-terminal acidic region) oligomerizes into a flat lattice via two different dimerization interfaces. In vitro, heteromerizes with CHMP2A (but not CHMP4) to form helical tubular structures that expose membrane-interacting sites on the outside whereas VPS4B can associate on the inside of the tubule. May interact with IGFBP7; the relevance of such interaction however remains unclear. Interacts with CHMP2A. Interacts with CHMP4A; the interaction requires the release of CHMP4A autoinhibition. Interacts with VPS4A. Interacts with STAMBP; the interaction appears to relieve the autoinhibition of CHMP3. Interacts with VTA1. As to expression, expressed in lung, testis, heart, spleen, skeletal muscle, kidney, liver and brain.

The protein localises to the cytoplasm. It localises to the cytosol. Its subcellular location is the membrane. It is found in the endosome. The protein resides in the late endosome membrane. In terms of biological role, probable core component of the endosomal sorting required for transport complex III (ESCRT-III) which is involved in multivesicular bodies (MVBs) formation and sorting of endosomal cargo proteins into MVBs. MVBs contain intraluminal vesicles (ILVs) that are generated by invagination and scission from the limiting membrane of the endosome and mostly are delivered to lysosomes enabling degradation of membrane proteins, such as stimulated growth factor receptors, lysosomal enzymes and lipids. The MVB pathway appears to require the sequential function of ESCRT-O, -I,-II and -III complexes. ESCRT-III proteins mostly dissociate from the invaginating membrane before the ILV is released. The ESCRT machinery also functions in topologically equivalent membrane fission events, such as the terminal stages of cytokinesis. ESCRT-III proteins are believed to mediate the necessary vesicle extrusion and/or membrane fission activities, possibly in conjunction with the AAA ATPase VPS4. Selectively binds to phosphatidylinositol 3,5-bisphosphate PtdIns(3,5)P2 and PtdIns(3,4)P2 in preference to other phosphoinositides tested. Involved in late stages of cytokinesis. Plays a role in endosomal sorting/trafficking of EGF receptor. The chain is Charged multivesicular body protein 3 (Chmp3) from Mus musculus (Mouse).